Reading from the N-terminus, the 318-residue chain is MIKKRNTTKISVIGAGSVGATTAYALMLSGVATEIVLVDVNKAKTEGEAMDLSHGADFVQPVNILSGDYKDTESSDIVVITAGAAQKVGETRLQLINKNINIFKSIIPEVVKYNKDAILLVVSNPVDVLSYVTYKLSGFPKERVIGSGTVLDTSRLKHEIGKRYKIDPRNVNTYIMGEHGDSEIATWSVTNIQNIKIDEYANKENLEYNDNFRKEVYENVKNAAYEVINRKGATFYAIALAVTRIVKAILGDEKTILPVSTLVENYYGIKDVYLGMPCIVGGSGVEKALSIDLNKTEASKLVKSAETLKNTLNNASGL.

NAD(+)-binding positions include V18, D39, K44, Y69, and 83-84 (GA). Positions 86 and 92 each coordinate substrate. NAD(+) contacts are provided by residues S105, 122-124 (VSN), and S147. Position 124-127 (124-127 (NPVD)) interacts with substrate. 152–155 (DTSR) is a binding site for substrate. Residue H179 is the Proton acceptor of the active site. Y225 bears the Phosphotyrosine mark. Residue T234 coordinates substrate.

Belongs to the LDH/MDH superfamily. LDH family. As to quaternary structure, homotetramer.

It is found in the cytoplasm. The enzyme catalyses (S)-lactate + NAD(+) = pyruvate + NADH + H(+). The protein operates within fermentation; pyruvate fermentation to lactate; (S)-lactate from pyruvate: step 1/1. Its function is as follows. Catalyzes the conversion of lactate to pyruvate. The protein is L-lactate dehydrogenase of Clostridium botulinum (strain 657 / Type Ba4).